A 400-amino-acid polypeptide reads, in one-letter code: Cytochrome P450 BJ-1 homolog (400 aa).

Heme is bound at residue Cys-349.

Belongs to the cytochrome P450 family. It depends on heme as a cofactor.

Cytochromes P450 are a group of heme-thiolate monooxygenases. They oxidize a variety of structurally unrelated compounds, including steroids, fatty acids, and xenobiotics. The protein is Cytochrome P450 BJ-1 homolog (cyp112A2) of Sinorhizobium fredii (strain NBRC 101917 / NGR234).